The sequence spans 103 residues: MAQFVRNLVEKTPALVNAAVTYSKPRLATFWYYAKVELVPPTPAEIPRAIQGLKKIVNSAQTGSFKQLTVKEAVLNGLVATEVLMWFYVGEIIGKRGIIGYDV.

An N-acetylalanine modification is found at Ala2. N6-acetyllysine occurs at positions 11, 24, 35, and 54.

It belongs to the ATPase g subunit family. As to quaternary structure, component of the ATP synthase complex composed at least of ATP5F1A/subunit alpha, ATP5F1B/subunit beta, ATP5MC1/subunit c (homooctomer), MT-ATP6/subunit a, MT-ATP8/subunit 8, ATP5ME/subunit e, ATP5MF/subunit f, ATP5MG/subunit g, ATP5MK/subunit k, ATP5MJ/subunit j, ATP5F1C/subunit gamma, ATP5F1D/subunit delta, ATP5F1E/subunit epsilon, ATP5PF/subunit F6, ATP5PB/subunit b, ATP5PD/subunit d, ATP5PO/subunit OSCP. ATP synthase complex consists of a soluble F(1) head domain (subunits alpha(3) and beta(3)) - the catalytic core - and a membrane F(0) domain - the membrane proton channel (subunits c, a, 8, e, f, g, k and j). These two domains are linked by a central stalk (subunits gamma, delta, and epsilon) rotating inside the F1 region and a stationary peripheral stalk (subunits F6, b, d, and OSCP).

Its subcellular location is the mitochondrion. It localises to the mitochondrion inner membrane. Its function is as follows. Subunit g, of the mitochondrial membrane ATP synthase complex (F(1)F(0) ATP synthase or Complex V) that produces ATP from ADP in the presence of a proton gradient across the membrane which is generated by electron transport complexes of the respiratory chain. ATP synthase complex consist of a soluble F(1) head domain - the catalytic core - and a membrane F(1) domain - the membrane proton channel. These two domains are linked by a central stalk rotating inside the F(1) region and a stationary peripheral stalk. During catalysis, ATP synthesis in the catalytic domain of F(1) is coupled via a rotary mechanism of the central stalk subunits to proton translocation. In vivo, can only synthesize ATP although its ATP hydrolase activity can be activated artificially in vitro. Part of the complex F(0) domain. In Pongo abelii (Sumatran orangutan), this protein is ATP synthase F(0) complex subunit g, mitochondrial.